Consider the following 715-residue polypeptide: MSSGTSGDQISHFGKTLTTTASLVFGSQSMEDTILSYSSPYKKILHDTITSSGGTSSLMKVERSGRMFTPFRTRNSAFQDIFHASSGRGYFKNGFSDTRTSFQVLSYLSDAMLADIPSSESAAATSGKLVTEKGEKGKKKRAETAHARGPSLYQGFEASLPTINQTITTHQKKQIMNRDIKSIRESDATPEDVGQDVDIEKGEEETTHDEFTLPKGIKPEHLSNSYSIKNLKGAVQTITDNLDLLEIQKNLAASEIRELDLKMEKLKLMRDLVFRRVAKIEQNELFLEKHLMNIRERIDMIEEYNLDNDTDAEKAYEEATSAPEDTKDQYSELPDANTAESGETVVQEPQVNLASAQKSLKKRSKQTGYSHKNHEKKVQQHEFRHLRKTYPTLQQYYEPGANILSFDSAHEDNVTCLDFNLPFGTLCSAGKLDPTIKVWNLSKNKHVASITGHLATVSCMQMDQYNTLITGGRDALLKMWDIQKAIDNDSIPSDEVCIYTFDSHIDEITALSFEANNLVSGSQDRTIRQWDLNNGKCVQTLDINFATGGNLSRSMIGSGFLNTNNDHPIIGAIQCYDAALATGTKDGIVRLWDLRSGRVVRTLEGHSDAVTSLQFDSLNLVTGSLDNSIRIWDLRTGTLADTFSYEHPVTCLQFDLNKIVVANQEGTVKVYNRQEKKHWFCGGDEHSENAVEYVRYKDGYLVEGRANGDINAWAI.

The tract at residues Ala122 to Ala147 is disordered. Residues Ile228–Leu268 adopt a coiled-coil conformation. Residues Glu313–Gln380 are disordered. Positions Gln347–Lys358 are enriched in polar residues. The segment covering Ser359–Glu375 has biased composition (basic residues). WD repeat units lie at residues Ala409–Ser449, Gly452–Ser490, Ser503–Asp542, Asn564–Glu604, Gly605–Ser644, Glu646–Cys681, and Glu685–Ile715.

Belongs to the WD repeat MDV1/CAF4 family.

The protein localises to the mitochondrion outer membrane. Functionally, involved in mitochondrial fission. Acts as an adapter protein required to form mitochondrial fission complexes. Formation of these complexes is required to promote constriction and fission of the mitochondrial compartment at a late step in mitochondrial division. This is Mitochondrial division protein 1 (MDV1) from Eremothecium gossypii (strain ATCC 10895 / CBS 109.51 / FGSC 9923 / NRRL Y-1056) (Yeast).